A 480-amino-acid polypeptide reads, in one-letter code: Aspartyl/glutamyl-tRNA(Asn/Gln) amidotransferase subunit B (480 aa).

It belongs to the GatB/GatE family. GatB subfamily. As to quaternary structure, heterotrimer of A, B and C subunits.

The enzyme catalyses L-glutamyl-tRNA(Gln) + L-glutamine + ATP + H2O = L-glutaminyl-tRNA(Gln) + L-glutamate + ADP + phosphate + H(+). It carries out the reaction L-aspartyl-tRNA(Asn) + L-glutamine + ATP + H2O = L-asparaginyl-tRNA(Asn) + L-glutamate + ADP + phosphate + 2 H(+). Allows the formation of correctly charged Asn-tRNA(Asn) or Gln-tRNA(Gln) through the transamidation of misacylated Asp-tRNA(Asn) or Glu-tRNA(Gln) in organisms which lack either or both of asparaginyl-tRNA or glutaminyl-tRNA synthetases. The reaction takes place in the presence of glutamine and ATP through an activated phospho-Asp-tRNA(Asn) or phospho-Glu-tRNA(Gln). This Streptococcus pneumoniae (strain Hungary19A-6) protein is Aspartyl/glutamyl-tRNA(Asn/Gln) amidotransferase subunit B.